Consider the following 207-residue polypeptide: Vascular endothelial growth factor B (207 aa).

The signal sequence occupies residues 1–21 (MSPLLRRLLLVALLQLARTQA). 3 cysteine pairs are disulfide-bonded: Cys-47-Cys-89, Cys-78-Cys-122, and Cys-82-Cys-124. Over residues 129–139 (KESAVKPDRVA) the composition is skewed to basic and acidic residues. The segment at 129–178 (KESAVKPDRVAIPHHRPQPRSVPGWDSTPGASSPADIIHPTPAPGSSARL) is disordered.

Belongs to the PDGF/VEGF growth factor family. Homodimer; disulfide-linked. Can also form heterodimer with VEGF. In terms of processing, VEGF-B186 is O-glycosylated. As to expression, abundantly expressed in heart, brain, kidney and skeletal muscle.

It is found in the secreted. Its function is as follows. Growth factor for endothelial cells. VEGF-B167 binds heparin and neuropilin-1 whereas the binding to neuropilin-1 of VEGF-B186 is regulated by proteolysis. VEGF-B seems to be required for normal heart function in adult but is not required for proper development of the cardiovascular system either during development or for angiogenesis in adults. The protein is Vascular endothelial growth factor B (Vegfb) of Mus musculus (Mouse).